Here is a 245-residue protein sequence, read N- to C-terminus: tRNA1(Val) (adenine(37)-N6)-methyltransferase (245 aa).

The protein belongs to the methyltransferase superfamily. tRNA (adenine-N(6)-)-methyltransferase family.

Its subcellular location is the cytoplasm. It catalyses the reaction adenosine(37) in tRNA1(Val) + S-adenosyl-L-methionine = N(6)-methyladenosine(37) in tRNA1(Val) + S-adenosyl-L-homocysteine + H(+). Specifically methylates the adenine in position 37 of tRNA(1)(Val) (anticodon cmo5UAC). The polypeptide is tRNA1(Val) (adenine(37)-N6)-methyltransferase (Salmonella arizonae (strain ATCC BAA-731 / CDC346-86 / RSK2980)).